Reading from the N-terminus, the 238-residue chain is Polynucleotide 3'-phosphatase (238 aa).

It belongs to the DNA 3' phosphatase family.

The protein localises to the nucleus. It catalyses the reaction a 3'end (2'-deoxyribonucleotide 3'-phosphate)-DNA + H2O = a 3'-end 2'-deoxyribonucleotide-DNA + phosphate. Dephosphorylate DNA's 3'-phosphate termini. Has a role in the repair of breaks in single-stranded DNA. The chain is Polynucleotide 3'-phosphatase (TPP1) from Saccharomyces cerevisiae (strain ATCC 204508 / S288c) (Baker's yeast).